The chain runs to 200 residues: ATP-dependent Clp protease proteolytic subunit 2 (200 aa).

Ser96 (nucleophile) is an active-site residue. His121 is a catalytic residue.

It belongs to the peptidase S14 family. In terms of assembly, fourteen ClpP subunits assemble into 2 heptameric rings which stack back to back to give a disk-like structure with a central cavity, resembling the structure of eukaryotic proteasomes.

It localises to the cytoplasm. The catalysed reaction is Hydrolysis of proteins to small peptides in the presence of ATP and magnesium. alpha-casein is the usual test substrate. In the absence of ATP, only oligopeptides shorter than five residues are hydrolyzed (such as succinyl-Leu-Tyr-|-NHMec, and Leu-Tyr-Leu-|-Tyr-Trp, in which cleavage of the -Tyr-|-Leu- and -Tyr-|-Trp bonds also occurs).. Cleaves peptides in various proteins in a process that requires ATP hydrolysis. Has a chymotrypsin-like activity. Plays a major role in the degradation of misfolded proteins. The protein is ATP-dependent Clp protease proteolytic subunit 2 of Synechococcus sp. (strain JA-2-3B'a(2-13)) (Cyanobacteria bacterium Yellowstone B-Prime).